The sequence spans 345 residues: MTDKTSLSYKDAGVDIDAGNALVERIKGVAKRTRRPEVMGGLGGFGALCRIPAGYREPILVSGTDGVGTKLRLAIDLKKHDTVGIDLVAMCVNDLIVQGAEPLFFLDYYATGKLDVDTAAAVVTGIGAGCEQSNCALVGGETAEMPGMYEGEDYDMAGFCVGVVEASEIIDGSKVAAGDALIALASSGPHSNGFSLIRKILEVSKADVQQPLGDSTLANALLAPTRIYVKPVLKLLKNCEVHALSHITGGGFWENIPRVLPENTKAVIDGSSWQWPEVFNWLQKSGNVETYEMYRTFNCGVGMIIALPQAQVDAALALLKAEGENAWLIGQIEQAAAGEKQVEIN.

Belongs to the AIR synthase family.

It localises to the cytoplasm. The catalysed reaction is 2-formamido-N(1)-(5-O-phospho-beta-D-ribosyl)acetamidine + ATP = 5-amino-1-(5-phospho-beta-D-ribosyl)imidazole + ADP + phosphate + H(+). It functions in the pathway purine metabolism; IMP biosynthesis via de novo pathway; 5-amino-1-(5-phospho-D-ribosyl)imidazole from N(2)-formyl-N(1)-(5-phospho-D-ribosyl)glycinamide: step 2/2. This Tolumonas auensis (strain DSM 9187 / NBRC 110442 / TA 4) protein is Phosphoribosylformylglycinamidine cyclo-ligase.